A 156-amino-acid chain; its full sequence is tRNA (cytidine(34)-2'-O)-methyltransferase (156 aa).

S-adenosyl-L-methionine contacts are provided by Gly102, Leu124, and Ser132.

The protein belongs to the class IV-like SAM-binding methyltransferase superfamily. RNA methyltransferase TrmH family. TrmL subfamily. As to quaternary structure, homodimer.

The protein localises to the cytoplasm. The enzyme catalyses cytidine(34) in tRNA + S-adenosyl-L-methionine = 2'-O-methylcytidine(34) in tRNA + S-adenosyl-L-homocysteine + H(+). It carries out the reaction 5-carboxymethylaminomethyluridine(34) in tRNA(Leu) + S-adenosyl-L-methionine = 5-carboxymethylaminomethyl-2'-O-methyluridine(34) in tRNA(Leu) + S-adenosyl-L-homocysteine + H(+). Methylates the ribose at the nucleotide 34 wobble position in the two leucyl isoacceptors tRNA(Leu)(CmAA) and tRNA(Leu)(cmnm5UmAA). Catalyzes the methyl transfer from S-adenosyl-L-methionine to the 2'-OH of the wobble nucleotide. The sequence is that of tRNA (cytidine(34)-2'-O)-methyltransferase from Burkholderia ambifaria (strain ATCC BAA-244 / DSM 16087 / CCUG 44356 / LMG 19182 / AMMD) (Burkholderia cepacia (strain AMMD)).